A 469-amino-acid chain; its full sequence is Cholesterol 7-desaturase nvd (469 aa).

The first 25 residues, 1 to 25, serve as a signal peptide directing secretion; that stretch reads MASFCASKFLPGLLMLGLGLAVALA. The chain crosses the membrane as a helical span at residues 58–78; that stretch reads NFVASQTLLTLTIFGVASFIL. The 107-residue stretch at 132–238 folds into the Rieske domain; the sequence is IPLVASQDLV…VIEQNGFVLV (107 aa). Residues cysteine 172, histidine 174, cysteine 192, and histidine 195 each coordinate [2Fe-2S] cluster.

It belongs to the cholesterol 7-desaturase family. [2Fe-2S] cluster serves as cofactor.

It is found in the membrane. It carries out the reaction cholesterol + NADPH + O2 + H(+) = 7-dehydrocholesterol + NADP(+) + 2 H2O. The enzyme catalyses cholesterol + NADH + O2 + H(+) = 7-dehydrocholesterol + NAD(+) + 2 H2O. The protein operates within steroid hormone biosynthesis; dafachronic acid biosynthesis. Catalyzes the production of 7-dehydrocholesterol (7-DHC or cholesta-5,7-dien-3beta-ol) by inserting a double bond (desaturating) at the C7-C8 single bond of cholesterol. Essential regulator of steroid biosynthesis as this reaction is the first step in the synthesis of the steroid hormone Delta(7)-dafachronic acid. This Hemicentrotus pulcherrimus (Sea urchin) protein is Cholesterol 7-desaturase nvd.